The chain runs to 359 residues: Probable 2-oxoacid dependent dioxygenase (359 aa).

The 102-residue stretch at 207–308 (KGLWMLCHCF…ISVACFFVHT (102 aa)) folds into the Fe2OG dioxygenase domain. Fe cation is bound by residues histidine 231, aspartate 233, and histidine 287. The segment at 329–359 (PPKYRDTTSESSNHYVARKPNGNSSLDHLRI) is disordered. Polar residues predominate over residues 349–359 (NGNSSLDHLRI).

The protein belongs to the iron/ascorbate-dependent oxidoreductase family. Fe(2+) serves as cofactor. As to expression, expressed in leaves and seeds. All cultivars with seed-only-functional allele have low to non-detectable GSL-OH expression in the leaves.

The enzyme catalyses gluconapin + AH2 + O2 = progoitrin + A + H2O. Necessary for the hydroxylation of but-3-enyl glucosinolate to 2-hydroxybut-3-enyl glucosinolate, which is toxic to insects, bacteria and nematodes, inhibits seed germination and produces bitter flavors. This is Probable 2-oxoacid dependent dioxygenase from Arabidopsis thaliana (Mouse-ear cress).